We begin with the raw amino-acid sequence, 945 residues long: Glutamyl aminopeptidase (945 aa).

Residues 1-18 lie on the Cytoplasmic side of the membrane; sequence MNFAEEEPSKKYCIKGKH. The chain crosses the membrane as a helical; Signal-anchor for type II membrane protein span at residues 19–39; sequence VAIICGVVVAVGLIVGLSVGL. Over 40–945 the chain is Extracellular; the sequence is TRSCEQDTTP…SIREWFASLP (906 aa). A disordered region spans residues 43–77; that stretch reads CEQDTTPAPSQPPPEASTALPPQDQNVCPDSEDES. Residues N116 and N189 are each glycosylated (N-linked (GlcNAc...) asparagine). E215 lines the substrate pocket. N316 carries an N-linked (GlcNAc...) asparagine glycan. 349-353 contributes to the substrate binding site; sequence GAMEN. H385 serves as a coordination point for Zn(2+). The active-site Proton acceptor is E386. Positions 389 and 408 each coordinate Zn(2+). 6 N-linked (GlcNAc...) asparagine glycosylation sites follow: N546, N601, N637, N669, N754, and N792. A substrate-binding site is contributed by R878.

The protein belongs to the peptidase M1 family. As to quaternary structure, homodimer; disulfide-linked. Zn(2+) is required as a cofactor. Early B-lineage cells and certain stromal cell of hemopoietic tissues. Also expressed by capillary endothelial cells, placenta, and epithelial cells of the intestine and proximal renal tubules.

The protein resides in the cell membrane. The enzyme catalyses Release of N-terminal glutamate (and to a lesser extent aspartate) from a peptide.. Its activity is regulated as follows. Substrate specificity is modulated by calcium which enhances the enzymatic activity for cleavage of acidic residues while reducing its activity with basic residues. Inhibited by aminopeptidase inhibitors amastatin and bestatin. Regulates central hypertension through its calcium-modulated preference to cleave N-terminal acidic residues from peptides such as angiotensin II. The protein is Glutamyl aminopeptidase (Enpep) of Mus musculus (Mouse).